The chain runs to 1626 residues: Collagen alpha-1(XXII) chain (1626 aa).

Residues 1 to 27 (MAGLRGNAVAGLLWMLLLWSGGGGCQA) form the signal peptide. Residues 38–213 (DLVFLLDTSS…NAIDKIRGKL (176 aa)) enclose the VWFA domain. Positions 239–427 (GTKEITGFDL…LQRIVIYCDS (189 aa)) constitute a Laminin G-like domain. N375 carries N-linked (GlcNAc...) asparagine glycosylation. 16 Collagen-like domains span residues 481–520 (GEKG…GDVG), 526–565 (QGEK…PGEV), 566–625 (GMRG…PGPS), 657–708 (GEQG…GIPG), 714–773 (GPPG…PGER), 774–833 (GEDG…PGLK), 868–922 (GPKG…GAPG), 925–984 (GAPG…PGKG), 1047–1095 (AGPP…PGKP), 1118–1155 (PPGP…AGPP), 1156–1215 (GLPG…AGPP), 1249–1308 (GKPG…PGKD), 1315–1374 (GPQG…PGEK), 1387–1446 (GEPG…PGPP), 1495–1550 (SQGR…PGAP), and 1575–1604 (DGLP…PPGQ). 4 disordered regions span residues 506–1002 (PVGA…GPLG), 1019–1103 (GGQC…LLSP), 1119–1458 (PGPP…RGES), and 1491–1609 (YMKS…DPSQ). A compositionally biased stretch (basic and acidic residues) spans 544 to 553 (DGSKGMRGEP). Pro residues predominate over residues 571–580 (QGPPGLPGPP). Over residues 591-606 (ERGEKGTRGEKGERGL) the composition is skewed to basic and acidic residues. Over residues 661–670 (APGPRGHQGA) the composition is skewed to low complexity. Pro residues-rich tracts occupy residues 715–728 (PPGP…PGPG) and 742–751 (KPGPPGPTGP). 2 stretches are compositionally biased toward basic and acidic residues: residues 769–778 (EPGERGEDGL) and 815–826 (RGEKGDQGEKGE). Residues 908-939 (AHGAPGAAGNPGAPGHVGAPGPSGPPGSVGAP) are compositionally biased toward low complexity. The span at 945 to 957 (PGKDGERGEKGAA) shows a compositional bias: basic and acidic residues. Composition is skewed to low complexity over residues 959–974 (EEGS…DPGA) and 1056–1065 (PGDKGSPGSR). Composition is skewed to basic and acidic residues over residues 1131–1151 (KGDK…KKGE) and 1173–1185 (RGAD…KGDQ). Low complexity predominate over residues 1205–1223 (ADGIAGAAGPPGIQGSPGK). Positions 1241-1250 (EEGKEGRDGK) are enriched in basic and acidic residues. Over residues 1260–1275 (AGEPGLPGPEGARGPP) the composition is skewed to low complexity. A compositionally biased stretch (low complexity) spans 1379–1389 (KEGVPGKPGEP). The span at 1391 to 1404 (FKGERGDPGIKGDK) shows a compositional bias: basic and acidic residues. A compositionally biased stretch (gly residues) spans 1405–1414 (GPPGGKGQPG). The segment covering 1440-1449 (VGPPGPPGQP) has biased composition (pro residues). The span at 1521–1530 (GRPGQGGLEG) shows a compositional bias: gly residues. Positions 1595–1604 (LPGPPGPPGQ) are enriched in pro residues.

Belongs to the fibril-associated collagens with interrupted helices (FACIT) family. In terms of tissue distribution, restrictive expression is observed at tissue junctions such as the myotendinous junction in skeletal and heart muscle, the articular cartilage-synovial fluid junction, or the border between the anagen hair follicle and the dermis in the skin. It is deposited in the basement membrane zone of the myotendinous junction and the hair follicle and associated with the extrafibrillar matrix in cartilage.

It localises to the secreted. The protein resides in the extracellular space. Its subcellular location is the extracellular matrix. The protein localises to the cytoplasm. In terms of biological role, acts as a cell adhesion ligand for skin epithelial cells and fibroblasts. The sequence is that of Collagen alpha-1(XXII) chain (COL22A1) from Homo sapiens (Human).